Consider the following 211-residue polypeptide: FMN-dependent NADH:quinone oxidoreductase (211 aa).

FMN contacts are provided by residues Ser-10 and 16–18 (STS).

The protein belongs to the azoreductase type 1 family. As to quaternary structure, homodimer. FMN serves as cofactor.

It carries out the reaction 2 a quinone + NADH + H(+) = 2 a 1,4-benzosemiquinone + NAD(+). It catalyses the reaction N,N-dimethyl-1,4-phenylenediamine + anthranilate + 2 NAD(+) = 2-(4-dimethylaminophenyl)diazenylbenzoate + 2 NADH + 2 H(+). Quinone reductase that provides resistance to thiol-specific stress caused by electrophilic quinones. Functionally, also exhibits azoreductase activity. Catalyzes the reductive cleavage of the azo bond in aromatic azo compounds to the corresponding amines. In Frankia casuarinae (strain DSM 45818 / CECT 9043 / HFP020203 / CcI3), this protein is FMN-dependent NADH:quinone oxidoreductase.